The primary structure comprises 965 residues: Vacuolar membrane protease (965 aa).

The Cytoplasmic segment spans residues 1–16 (MARPSLSPSNPLGFTP). Residues 17–37 (WPVTVITAVVYLALVVPLLVV) traverse the membrane as a helical segment. Residues 38–387 (HHVVPSAPSS…SAFVVFELHT (350 aa)) are Vacuolar-facing. 2 N-linked (GlcNAc...) asparagine glycosylation sites follow: Asn53 and Asn119. The Zn(2+) site is built by His171 and Asp183. Glu217 serves as the catalytic Proton acceptor. The Zn(2+) site is built by Glu218, Glu243, and His316. A helical membrane pass occupies residues 388-408 (LFALSVTLLVVAPLVLLVTSI). Residues 409–441 (ALARADKMYLFRSSASPEDSDGSEVVPLHGVRG) are Cytoplasmic-facing. A helical membrane pass occupies residues 442–462 (FFRFPFLLVIPTAVTVGLAYL). Over 463-472 (VTKFNPYIIH) the chain is Vacuolar. A helical transmembrane segment spans residues 473–493 (SSEYAVWSMMISAWVFLAWFV). Residues 494-507 (SRVADFARPSAFHR) lie on the Cytoplasmic side of the membrane. Residues 508-528 (VYTLTWLFLVEWVFLVISTVY) traverse the membrane as a helical segment. Residues 529–532 (ENQY) lie on the Vacuolar side of the membrane. A helical transmembrane segment spans residues 533 to 553 (GLAGGYFVLFVFAGTFLATWI). Residues 554-661 (SYLELFALPR…WSIHLPKWVW (108 aa)) lie on the Cytoplasmic side of the membrane. The interval 577 to 610 (RTSSHGSRLGTASGEDVEDGEDEDDDGTTAEATE) is disordered. Positions 591–604 (EDVEDGEDEDDDGT) are enriched in acidic residues. Residues 662–682 (VLQFLLTAPLVLIFVGPLALL) form a helical membrane-spanning segment. At 683 to 698 (LTSALRQTGQDGSPSL) the chain is on the vacuolar side. The chain crosses the membrane as a helical span at residues 699–719 (FIYIAVAALTTLLFIPLLPFI). The Cytoplasmic segment spans residues 720–725 (HRYTHH). Residues 726–746 (IPLFLLCVFAGTLIYNLVAFP) form a helical membrane-spanning segment. The Vacuolar portion of the chain corresponds to 747-965 (FSPANRLKLF…LVEGSRRFEV (219 aa)). Residues Asn793 and Asn830 are each glycosylated (N-linked (GlcNAc...) asparagine).

The protein belongs to the peptidase M28 family. Zn(2+) is required as a cofactor.

It is found in the vacuole membrane. In terms of biological role, may be involved in vacuolar sorting and osmoregulation. In Aspergillus fumigatus (strain CBS 144.89 / FGSC A1163 / CEA10) (Neosartorya fumigata), this protein is Vacuolar membrane protease.